A 216-amino-acid chain; its full sequence is Peptide methionine sulfoxide reductase MsrA (216 aa).

Cys-54 is an active-site residue.

This sequence belongs to the MsrA Met sulfoxide reductase family.

The enzyme catalyses L-methionyl-[protein] + [thioredoxin]-disulfide + H2O = L-methionyl-(S)-S-oxide-[protein] + [thioredoxin]-dithiol. It carries out the reaction [thioredoxin]-disulfide + L-methionine + H2O = L-methionine (S)-S-oxide + [thioredoxin]-dithiol. Functionally, has an important function as a repair enzyme for proteins that have been inactivated by oxidation. Catalyzes the reversible oxidation-reduction of methionine sulfoxide in proteins to methionine. The polypeptide is Peptide methionine sulfoxide reductase MsrA (Xanthomonas oryzae pv. oryzae (strain PXO99A)).